The sequence spans 304 residues: Acetyl-coenzyme A carboxylase carboxyl transferase subunit beta (304 aa).

In terms of domain architecture, CoA carboxyltransferase N-terminal spans 25 to 294 (LWIKCPETGE…KAVKRDTATE (270 aa)).

It belongs to the AccD/PCCB family. As to quaternary structure, acetyl-CoA carboxylase is a heterohexamer composed of biotin carboxyl carrier protein (AccB), biotin carboxylase (AccC) and two subunits each of ACCase subunit alpha (AccA) and ACCase subunit beta (AccD).

The protein resides in the cytoplasm. It carries out the reaction N(6)-carboxybiotinyl-L-lysyl-[protein] + acetyl-CoA = N(6)-biotinyl-L-lysyl-[protein] + malonyl-CoA. It participates in lipid metabolism; malonyl-CoA biosynthesis; malonyl-CoA from acetyl-CoA: step 1/1. Functionally, component of the acetyl coenzyme A carboxylase (ACC) complex. Biotin carboxylase (BC) catalyzes the carboxylation of biotin on its carrier protein (BCCP) and then the CO(2) group is transferred by the transcarboxylase to acetyl-CoA to form malonyl-CoA. This is Acetyl-coenzyme A carboxylase carboxyl transferase subunit beta from Rhizobium meliloti (strain 1021) (Ensifer meliloti).